A 142-amino-acid chain; its full sequence is Sec-independent protein translocase protein TatB (142 aa).

A helical membrane pass occupies residues 1-21 (MFDFGFSELVVIGVVMLIVVG). The tract at residues 99 to 142 (AAPPDNTTSAESQAAADPAAVDSSQQLELRLDTTPKQVVGSDKA) is disordered. Low complexity predominate over residues 107 to 124 (SAESQAAADPAAVDSSQQ).

The protein belongs to the TatB family. In terms of assembly, the Tat system comprises two distinct complexes: a TatABC complex, containing multiple copies of TatA, TatB and TatC subunits, and a separate TatA complex, containing only TatA subunits. Substrates initially bind to the TatABC complex, which probably triggers association of the separate TatA complex to form the active translocon.

Its subcellular location is the cell inner membrane. Part of the twin-arginine translocation (Tat) system that transports large folded proteins containing a characteristic twin-arginine motif in their signal peptide across membranes. Together with TatC, TatB is part of a receptor directly interacting with Tat signal peptides. TatB may form an oligomeric binding site that transiently accommodates folded Tat precursor proteins before their translocation. The protein is Sec-independent protein translocase protein TatB of Azoarcus sp. (strain BH72).